Reading from the N-terminus, the 363-residue chain is Wortmanamides biosynthesis cluster protein C (363 aa).

Transmembrane regions (helical) follow at residues phenylalanine 15–alanine 35, tryptophan 48–isoleucine 68, isoleucine 95–phenylalanine 115, isoleucine 129–glutamine 149, isoleucine 175–isoleucine 195, valine 210–valine 230, and leucine 237–cysteine 257. A disordered region spans residues serine 293 to proline 312. Residue asparagine 321 is glycosylated (N-linked (GlcNAc...) asparagine). The segment at serine 344–valine 363 is disordered.

This sequence belongs to the SAT4 family.

The protein resides in the membrane. It functions in the pathway secondary metabolite biosynthesis. Functionally, part of the gene cluster that mediates the biosynthesis of wortmanamides A and B, reduced long-chain polyketides amidated with a specific omega-amino acid, 5-aminopentanoic acid (5PA). The PKS modules of TwmB are involved in the synthesis of the polyketide backbone, whereas the non-canonical C domain of TwmB is a bonafide condensation domain that specifically selects 5PA and catalyzes amidation to release polyketide chain. The C domain clearly prefers C16 and C18 fatty acyl substrates, which is consistent with simultaneous formation of both octaketide and nonaketide acyl amides wortmanamides A and B. Because TwmB lacks a designated enoylreductase (ER) domain, the required activity is provided the enoyl reductase TwmE. The roles of the remaining enzymes have still to be clarified. The sequence is that of Wortmanamides biosynthesis cluster protein C from Talaromyces wortmannii (Penicillium wortmannii).